The following is a 497-amino-acid chain: Probable cytosol aminopeptidase (497 aa).

Mn(2+)-binding residues include Lys265 and Asp270. Lys277 is a catalytic residue. Mn(2+) is bound by residues Asp288, Asp347, and Glu349. Arg351 is an active-site residue.

It belongs to the peptidase M17 family. Mn(2+) serves as cofactor.

It localises to the cytoplasm. It carries out the reaction Release of an N-terminal amino acid, Xaa-|-Yaa-, in which Xaa is preferably Leu, but may be other amino acids including Pro although not Arg or Lys, and Yaa may be Pro. Amino acid amides and methyl esters are also readily hydrolyzed, but rates on arylamides are exceedingly low.. The catalysed reaction is Release of an N-terminal amino acid, preferentially leucine, but not glutamic or aspartic acids.. Functionally, presumably involved in the processing and regular turnover of intracellular proteins. Catalyzes the removal of unsubstituted N-terminal amino acids from various peptides. The chain is Probable cytosol aminopeptidase from Geobacillus thermodenitrificans (strain NG80-2).